The chain runs to 145 residues: Dihydrolipoyllysine-residue succinyltransferase component of 2-oxoglutarate dehydrogenase complex, mitochondrial (145 aa).

The Lipoyl-binding domain occupies 4 to 31 (ITVQTPAFAESVTEGDVRVEGGTPLFTL). Ser-14 carries the phosphoserine modification. Residues Lys-36 and Lys-66 each carry the N6-acetyllysine modification. Residues His-119 and Asp-123 contribute to the active site.

Belongs to the 2-oxoacid dehydrogenase family. In terms of assembly, the 2-oxoglutarate dehydrogenase complex is composed of OGDH (2-oxoglutarate dehydrogenase; E1), DLST (dihydrolipoamide succinyltransferase; E2), DLD (dihydrolipoamide dehydrogenase; E3) and the assembly factor KGD4. It contains multiple copies of the three enzymatic components (E1, E2 and E3). In the nucleus, the 2-oxoglutarate dehydrogenase complex associates with KAT2A. Interacts with ABHD11; this interaction maintains the functional lipoylation of the 2-oxoglutarate dehydrogenase complex. The cofactor is (R)-lipoate.

It localises to the mitochondrion matrix. It is found in the nucleus. The catalysed reaction is N(6)-[(R)-dihydrolipoyl]-L-lysyl-[protein] + succinyl-CoA = N(6)-[(R)-S(8)-succinyldihydrolipoyl]-L-lysyl-[protein] + CoA. It functions in the pathway amino-acid degradation; L-lysine degradation via saccharopine pathway; glutaryl-CoA from L-lysine: step 6/6. It participates in carbohydrate metabolism; tricarboxylic acid cycle. Its function is as follows. Dihydrolipoamide succinyltransferase (E2) component of the 2-oxoglutarate dehydrogenase complex. The 2-oxoglutarate dehydrogenase complex catalyzes the overall conversion of 2-oxoglutarate to succinyl-CoA and CO(2). The 2-oxoglutarate dehydrogenase complex is mainly active in the mitochondrion. A fraction of the 2-oxoglutarate dehydrogenase complex also localizes in the nucleus and is required for lysine succinylation of histones: associates with KAT2A on chromatin and provides succinyl-CoA to histone succinyltransferase KAT2A. This is Dihydrolipoyllysine-residue succinyltransferase component of 2-oxoglutarate dehydrogenase complex, mitochondrial from Mesocricetus auratus (Golden hamster).